Reading from the N-terminus, the 162-residue chain is Probable E3 ubiquitin-protein ligase XERICO (162 aa).

Residues 12-28 form a helical membrane-spanning segment; sequence GMLCVILVNTALSISIV. The RING-type; atypical zinc finger occupies 103 to 145; the sequence is CSVCLSKFQGDSEINKLKCGHLFHKTCLEKWIDYWNITCPLCR.

Interacts with UBC8 and TULP9. In terms of tissue distribution, ubiquitous. Higher expression in actively growing tissues.

The protein localises to the membrane. It catalyses the reaction S-ubiquitinyl-[E2 ubiquitin-conjugating enzyme]-L-cysteine + [acceptor protein]-L-lysine = [E2 ubiquitin-conjugating enzyme]-L-cysteine + N(6)-ubiquitinyl-[acceptor protein]-L-lysine.. The protein operates within protein modification; protein ubiquitination. Functionally, function on abscisic acid homeostasis at post-translational level, probably through ubiquitin/proteasome-dependent substrate-specific degradation. The polypeptide is Probable E3 ubiquitin-protein ligase XERICO (XERICO) (Arabidopsis thaliana (Mouse-ear cress)).